The following is a 702-amino-acid chain: Protein sepa-1 (702 aa).

Residues 39–160 (RQRFCYEKTD…KESTSYGQFR (122 aa)) form a required for self-association and interaction with pgl-3 region. 3 short sequence motifs (LIR) span residues 107-110 (FVEV), 247-250 (FQKI), and 298-301 (FGFV). The disordered stretch occupies residues 450–471 (AKDPEEPTTAASEGGNTYGYQE). Residues 458 to 468 (TAASEGGNTYG) show a composition bias toward polar residues. The short motif at 469–472 (YQEL) is the LIR 4 element. A coiled-coil region spans residues 508-543 (AAMDKKKKRRELKSRLNKINAQIDELEKRRMERAGK). Residues 545-564 (QVVSSSVPSEEAAQVEAPAS) are disordered. The 78-residue stretch at 597–674 (NTSKEWIVED…TVDQILKKTL (78 aa)) folds into the KIX domain. A compositionally biased stretch (basic and acidic residues) spans 675-685 (KKDQRATEHNH). The interval 675–702 (KKDQRATEHNHQQPTQSSDELAKNHEKN) is disordered.

As to quaternary structure, self-associates. Interacts (via the LIR motifs) with lgg-1; the interaction is direct. Interacts (via the LIR motifs) with lgg-2; the interaction is direct. Interacts with pgl-3; interaction is enhanced in the presence of RNA. Interacts with epg-2; may be modulated by prmt-1. Post-translationally, degraded by autophagy.

It is found in the nucleus. Its subcellular location is the cytoplasm. It localises to the cytoplasmic granule. Functionally, adapter protein that connects P-granules in somatic cells with the autophagic machinery. Association with other adapters such as epg-2 and P-granule components such as pgl-3 is required for the accumulation and degradation of P-granules by autophagy in somatic cells. This ensures exclusive localization of the P-granules in germ cells. This is Protein sepa-1 from Caenorhabditis elegans.